Here is a 355-residue protein sequence, read N- to C-terminus: RNA 3'-terminal phosphate cyclase (355 aa).

ATP-binding positions include Q109 and 291-295 (HLADQ). The active-site Tele-AMP-histidine intermediate is H316.

It belongs to the RNA 3'-terminal cyclase family. Type 1 subfamily.

The protein resides in the cytoplasm. The catalysed reaction is a 3'-end 3'-phospho-ribonucleotide-RNA + ATP = a 3'-end 2',3'-cyclophospho-ribonucleotide-RNA + AMP + diphosphate. Its function is as follows. Catalyzes the conversion of 3'-phosphate to a 2',3'-cyclic phosphodiester at the end of RNA. The mechanism of action of the enzyme occurs in 3 steps: (A) adenylation of the enzyme by ATP; (B) transfer of adenylate to an RNA-N3'P to produce RNA-N3'PP5'A; (C) and attack of the adjacent 2'-hydroxyl on the 3'-phosphorus in the diester linkage to produce the cyclic end product. The biological role of this enzyme is unknown but it is likely to function in some aspects of cellular RNA processing. The chain is RNA 3'-terminal phosphate cyclase from Koribacter versatilis (strain Ellin345).